We begin with the raw amino-acid sequence, 103 residues long: V-type ATP synthase subunit F (103 aa).

It belongs to the V-ATPase F subunit family.

Functionally, produces ATP from ADP in the presence of a proton gradient across the membrane. This is V-type ATP synthase subunit F from Clostridium botulinum (strain Alaska E43 / Type E3).